The primary structure comprises 133 residues: MGVWHGRSLRKPTGGRIRPHRKKRKFEMGNPPTETLVGEERKLKERRGMGGNVKKGLKFATHANVADPETGEVKCVRIEEVVKNPASQYYERHGVITKGAIIRTEIGLAKVTNRPGQEPVVNAVLIKEEEEEG.

The disordered stretch occupies residues 1 to 34 (MGVWHGRSLRKPTGGRIRPHRKKRKFEMGNPPTE).

This sequence belongs to the eukaryotic ribosomal protein eS8 family. As to quaternary structure, part of the 30S ribosomal subunit.

The protein is Small ribosomal subunit protein eS8 of Methanopyrus kandleri (strain AV19 / DSM 6324 / JCM 9639 / NBRC 100938).